Here is a 254-residue protein sequence, read N- to C-terminus: Phosphoribosylaminoimidazole-succinocarboxamide synthase 1 (254 aa).

The protein belongs to the SAICAR synthetase family.

It catalyses the reaction 5-amino-1-(5-phospho-D-ribosyl)imidazole-4-carboxylate + L-aspartate + ATP = (2S)-2-[5-amino-1-(5-phospho-beta-D-ribosyl)imidazole-4-carboxamido]succinate + ADP + phosphate + 2 H(+). It functions in the pathway purine metabolism; IMP biosynthesis via de novo pathway; 5-amino-1-(5-phospho-D-ribosyl)imidazole-4-carboxamide from 5-amino-1-(5-phospho-D-ribosyl)imidazole-4-carboxylate: step 1/2. This is Phosphoribosylaminoimidazole-succinocarboxamide synthase 1 (purC1) from Agrobacterium fabrum (strain C58 / ATCC 33970) (Agrobacterium tumefaciens (strain C58)).